A 401-amino-acid polypeptide reads, in one-letter code: Exodeoxyribonuclease 7 large subunit (401 aa).

This sequence belongs to the XseA family. As to quaternary structure, heterooligomer composed of large and small subunits.

The protein localises to the cytoplasm. The catalysed reaction is Exonucleolytic cleavage in either 5'- to 3'- or 3'- to 5'-direction to yield nucleoside 5'-phosphates.. In terms of biological role, bidirectionally degrades single-stranded DNA into large acid-insoluble oligonucleotides, which are then degraded further into small acid-soluble oligonucleotides. The chain is Exodeoxyribonuclease 7 large subunit from Clostridium botulinum (strain Hall / ATCC 3502 / NCTC 13319 / Type A).